A 319-amino-acid chain; its full sequence is L-threo-3-hydroxyaspartate ammonia-lyase (319 aa).

An N6-(pyridoxal phosphate)lysine modification is found at Lys-53. Residues Asn-80, 179 to 183, and Thr-304 each bind pyridoxal 5'-phosphate; that span reads GGGGM.

It belongs to the serine/threonine dehydratase family. As to quaternary structure, may be either a monomer or a homodimer. Pyridoxal 5'-phosphate is required as a cofactor. Requires Mn(2+) as cofactor. The cofactor is Mg(2+). Ca(2+) serves as cofactor.

It carries out the reaction (3S)-3-hydroxy-L-aspartate = oxaloacetate + NH4(+). With respect to regulation, is strongly inhibited by hydroxylamine and EDTA in vitro. Catalyzes the deamination of L-threo-3-hydroxyaspartate to oxaloacetate and ammonia. Shows a high specificity towards L-threo-3-hydroxyaspartate as other 3-hydroxyaminoacids, i.e. D,L-erythro- and D-threo-3-hydroxyaspartate, D-threonine, L-threonine, D,L-allothreonine, D,L-threo-3-phenylserine, D-serine, and L-serine, are not substrates for this enzyme. Exhibits no detectable serine and aspartate racemase activity. Might play a role in the detoxification of naturally occurring 3-hydroxyaspartate in Pseudomonas sp. T62 cells. This is L-threo-3-hydroxyaspartate ammonia-lyase from Pseudomonas sp.